The following is a 235-amino-acid chain: 1-(5-phosphoribosyl)-5-[(5-phosphoribosylamino)methylideneamino] imidazole-4-carboxamide isomerase (235 aa).

Asp8 (proton acceptor) is an active-site residue. Asp129 functions as the Proton donor in the catalytic mechanism.

It belongs to the HisA/HisF family.

Its subcellular location is the cytoplasm. It carries out the reaction 1-(5-phospho-beta-D-ribosyl)-5-[(5-phospho-beta-D-ribosylamino)methylideneamino]imidazole-4-carboxamide = 5-[(5-phospho-1-deoxy-D-ribulos-1-ylimino)methylamino]-1-(5-phospho-beta-D-ribosyl)imidazole-4-carboxamide. It functions in the pathway amino-acid biosynthesis; L-histidine biosynthesis; L-histidine from 5-phospho-alpha-D-ribose 1-diphosphate: step 4/9. The protein is 1-(5-phosphoribosyl)-5-[(5-phosphoribosylamino)methylideneamino] imidazole-4-carboxamide isomerase of Thermoanaerobacter sp. (strain X514).